Reading from the N-terminus, the 100-residue chain is uncharacterized protein (100 aa).

This is an uncharacterized protein from Acheta domesticus (House cricket).